The following is a 342-amino-acid chain: Phenylalanine--tRNA ligase alpha subunit (342 aa).

Mg(2+) is bound at residue E257.

The protein belongs to the class-II aminoacyl-tRNA synthetase family. Phe-tRNA synthetase alpha subunit type 1 subfamily. As to quaternary structure, tetramer of two alpha and two beta subunits. Requires Mg(2+) as cofactor.

The protein localises to the cytoplasm. The enzyme catalyses tRNA(Phe) + L-phenylalanine + ATP = L-phenylalanyl-tRNA(Phe) + AMP + diphosphate + H(+). This chain is Phenylalanine--tRNA ligase alpha subunit, found in Chlamydia trachomatis serovar A (strain ATCC VR-571B / DSM 19440 / HAR-13).